The sequence spans 545 residues: Lysine--tRNA ligase (545 aa).

The short motif at 33-41 is the 'HIGH' region element; sequence VSGLQHIGR. The 'KMSKS' region signature appears at 288–292; it reads DMSSS.

It belongs to the class-I aminoacyl-tRNA synthetase family.

The protein resides in the cytoplasm. The enzyme catalyses tRNA(Lys) + L-lysine + ATP = L-lysyl-tRNA(Lys) + AMP + diphosphate. The chain is Lysine--tRNA ligase (lysS) from Aeropyrum pernix (strain ATCC 700893 / DSM 11879 / JCM 9820 / NBRC 100138 / K1).